The following is a 703-amino-acid chain: tRNA 5-methylaminomethyl-2-thiouridine biosynthesis bifunctional protein MnmC (703 aa).

The segment at Met1–His281 is tRNA (mnm(5)s(2)U34)-methyltransferase. The interval Val286–Leu703 is FAD-dependent cmnm(5)s(2)U34 oxidoreductase.

It in the N-terminal section; belongs to the methyltransferase superfamily. tRNA (mnm(5)s(2)U34)-methyltransferase family. In the C-terminal section; belongs to the DAO family. FAD is required as a cofactor.

The protein resides in the cytoplasm. It catalyses the reaction 5-aminomethyl-2-thiouridine(34) in tRNA + S-adenosyl-L-methionine = 5-methylaminomethyl-2-thiouridine(34) in tRNA + S-adenosyl-L-homocysteine + H(+). Its function is as follows. Catalyzes the last two steps in the biosynthesis of 5-methylaminomethyl-2-thiouridine (mnm(5)s(2)U) at the wobble position (U34) in tRNA. Catalyzes the FAD-dependent demodification of cmnm(5)s(2)U34 to nm(5)s(2)U34, followed by the transfer of a methyl group from S-adenosyl-L-methionine to nm(5)s(2)U34, to form mnm(5)s(2)U34. This Shewanella sp. (strain MR-7) protein is tRNA 5-methylaminomethyl-2-thiouridine biosynthesis bifunctional protein MnmC.